Consider the following 153-residue polypeptide: MKFLFAFNFFSLYIYLYEFLCIHLCGSQVTPAGTVLNSNSALISRRINRRKMKNCNNNDLLKVLKMETTYNELPAHNLLMSSKNDINKLFDYINKNEELSKLMNSCGTYVYLKYLGVVIFSIKENVQISHLSEFIQYLLNKNVCIEFNQNVML.

Residues 1 to 27 (MKFLFAFNFFSLYIYLYEFLCIHLCGS) form the signal peptide. The tract at residues 127-153 (QISHLSEFIQYLLNKNVCIEFNQNVML) is dispensable for parasite growth in host erythrocytes.

It is found in the secreted. Its subcellular location is the parasitophorous vacuole lumen. The protein localises to the cell membrane. Functionally, acts as a specific inhibitor of subtilisin-like protease SUB1. This is Subtilisin propeptide-like protein from Plasmodium falciparum (isolate 3D7).